The following is a 421-amino-acid chain: Alpha-1-antitrypsin (421 aa).

Positions 1–24 (MASSSTWGLLLLAGLCCLVPISLA) are cleaved as a signal peptide. N-linked (GlcNAc...) asparagine glycosylation is found at Asn-73 and Asn-110. The segment at 376 to 395 (GATILEAIPMSIPPNVKFNK) is RCL. At Ser-386 the chain carries Phosphoserine.

This sequence belongs to the serpin family. In terms of assembly, interacts with CELA2A. Interacts with ERGIC3 and LMAN1/ERGIC53. Interacts with PRSS1/Trypsin.

The protein localises to the secreted. Functionally, inhibitor of serine proteases. Its primary target is elastase, but it also has a moderate affinity for plasmin and thrombin. The chain is Alpha-1-antitrypsin (SERPINA1) from Sus scrofa (Pig).